The following is a 273-amino-acid chain: MSTIRPVFYVSDGTGITAETIGHSLLTQFSGFNFVTDRMSFIDDADKARDAALRARAAGERYQVRPVVVNSCVDPQLSMILAESGALMLDVFAPFIEPLERELNAPRHSRVGRAHGMVDFETYHRRINAMNFALSHDDGIALNYDEADVILVAVSRAGKTPTCIYLALHYGIRAANYPLTEEDLESERLPPRLRNYRSKLFGLTIDPERLQQIRQERRANSRYSAAETCRREVATAERMFQMERIPTLSTTNTSIEEISSKVLSTLGLQREMF.

153–160 (AVSRAGKT) contacts ADP.

It belongs to the pyruvate, phosphate/water dikinase regulatory protein family. PSRP subfamily.

It carries out the reaction [pyruvate, water dikinase] + ADP = [pyruvate, water dikinase]-phosphate + AMP + H(+). The catalysed reaction is [pyruvate, water dikinase]-phosphate + phosphate + H(+) = [pyruvate, water dikinase] + diphosphate. In terms of biological role, bifunctional serine/threonine kinase and phosphorylase involved in the regulation of the phosphoenolpyruvate synthase (PEPS) by catalyzing its phosphorylation/dephosphorylation. This is Putative phosphoenolpyruvate synthase regulatory protein from Xanthomonas campestris pv. campestris (strain ATCC 33913 / DSM 3586 / NCPPB 528 / LMG 568 / P 25).